The primary structure comprises 269 residues: Ribosomal RNA small subunit methyltransferase J (269 aa).

Residues 124-125 (ER) and aspartate 188 contribute to the S-adenosyl-L-methionine site.

The protein belongs to the methyltransferase superfamily. RsmJ family.

Its subcellular location is the cytoplasm. The enzyme catalyses guanosine(1516) in 16S rRNA + S-adenosyl-L-methionine = N(2)-methylguanosine(1516) in 16S rRNA + S-adenosyl-L-homocysteine + H(+). Functionally, specifically methylates the guanosine in position 1516 of 16S rRNA. This Saccharophagus degradans (strain 2-40 / ATCC 43961 / DSM 17024) protein is Ribosomal RNA small subunit methyltransferase J.